We begin with the raw amino-acid sequence, 498 residues long: ATP synthase subunit beta, chloroplastic (498 aa).

ATP is bound at residue 172–179 (GGAGVGKT).

This sequence belongs to the ATPase alpha/beta chains family. As to quaternary structure, F-type ATPases have 2 components, CF(1) - the catalytic core - and CF(0) - the membrane proton channel. CF(1) has five subunits: alpha(3), beta(3), gamma(1), delta(1), epsilon(1). CF(0) has four main subunits: a(1), b(1), b'(1) and c(9-12).

It is found in the plastid. Its subcellular location is the chloroplast thylakoid membrane. It catalyses the reaction ATP + H2O + 4 H(+)(in) = ADP + phosphate + 5 H(+)(out). Produces ATP from ADP in the presence of a proton gradient across the membrane. The catalytic sites are hosted primarily by the beta subunits. This is ATP synthase subunit beta, chloroplastic from Phalaenopsis aphrodite subsp. formosana (Moth orchid).